A 689-amino-acid polypeptide reads, in one-letter code: uncharacterized protein (689 aa).

Serine 566 provides a ligand contact to substrate. Tyrosine 579 functions as the Proton acceptor in the catalytic mechanism.

Belongs to the short-chain dehydrogenases/reductases (SDR) family.

This is an uncharacterized protein from Bacillus subtilis (strain 168).